The chain runs to 138 residues: Small ribosomal subunit protein bS6 (138 aa).

The disordered stretch occupies residues 100–138 (SPLAKGREEDDSDSSARRARDDSDDDGDDDEDDRRASAD). A compositionally biased stretch (acidic residues) spans 121–131 (DSDDDGDDDED).

The protein belongs to the bacterial ribosomal protein bS6 family.

Its function is as follows. Binds together with bS18 to 16S ribosomal RNA. This Thioalkalivibrio sulfidiphilus (strain HL-EbGR7) protein is Small ribosomal subunit protein bS6.